The following is a 219-amino-acid chain: Ribose-5-phosphate isomerase A (219 aa).

Residues 28-31 (TGST), 81-84 (DGAD), and 94-97 (KGGG) each bind substrate. The active-site Proton acceptor is Glu103. Residue Lys121 participates in substrate binding.

Belongs to the ribose 5-phosphate isomerase family. In terms of assembly, homodimer.

The enzyme catalyses aldehydo-D-ribose 5-phosphate = D-ribulose 5-phosphate. Its pathway is carbohydrate degradation; pentose phosphate pathway; D-ribose 5-phosphate from D-ribulose 5-phosphate (non-oxidative stage): step 1/1. Its function is as follows. Catalyzes the reversible conversion of ribose-5-phosphate to ribulose 5-phosphate. The chain is Ribose-5-phosphate isomerase A from Enterobacter cloacae.